The sequence spans 258 residues: Ribosomal RNA small subunit methyltransferase J (258 aa).

Residues 107-108, 123-124, 159-160, and aspartate 177 each bind S-adenosyl-L-methionine; these read RD, ER, and SS.

This sequence belongs to the methyltransferase superfamily. RsmJ family.

The protein localises to the cytoplasm. The enzyme catalyses guanosine(1516) in 16S rRNA + S-adenosyl-L-methionine = N(2)-methylguanosine(1516) in 16S rRNA + S-adenosyl-L-homocysteine + H(+). Its function is as follows. Specifically methylates the guanosine in position 1516 of 16S rRNA. The sequence is that of Ribosomal RNA small subunit methyltransferase J from Shewanella sediminis (strain HAW-EB3).